The chain runs to 218 residues: Cytidylate kinase (218 aa).

An ATP-binding site is contributed by 21-29; it reads GPAASGKGT.

This sequence belongs to the cytidylate kinase family. Type 1 subfamily.

It is found in the cytoplasm. It carries out the reaction CMP + ATP = CDP + ADP. The enzyme catalyses dCMP + ATP = dCDP + ADP. The protein is Cytidylate kinase of Rickettsia canadensis (strain McKiel).